Consider the following 327-residue polypeptide: Transaldolase (327 aa).

The active-site Schiff-base intermediate with substrate is the Lys-132.

This sequence belongs to the transaldolase family. Type 1 subfamily.

Its subcellular location is the cytoplasm. It carries out the reaction D-sedoheptulose 7-phosphate + D-glyceraldehyde 3-phosphate = D-erythrose 4-phosphate + beta-D-fructose 6-phosphate. It functions in the pathway carbohydrate degradation; pentose phosphate pathway; D-glyceraldehyde 3-phosphate and beta-D-fructose 6-phosphate from D-ribose 5-phosphate and D-xylulose 5-phosphate (non-oxidative stage): step 2/3. Transaldolase is important for the balance of metabolites in the pentose-phosphate pathway. This Chlamydia pneumoniae (Chlamydophila pneumoniae) protein is Transaldolase.